The following is an 804-amino-acid chain: Endoplasmin (804 aa).

The first 21 residues, 1 to 21 (MRALWVLGLCCVLLTFGSVRA), serve as a signal peptide directing secretion. An SRT pseudosubstrate motif motif is present at residues 42–44 (SRT). N-linked (GlcNAc...) asparagine glycosylation is present at Asn62. Phosphoserine is present on Ser64. N-linked (GlcNAc...) asparagine glycosylation is present at Asn107. 3 residues coordinate ATP: Asn107, Asp149, and Asn162. Lys168 bears the N6-(2-hydroxyisobutyryl)lysine mark. A Phosphoserine modification is found at Ser172. Phe199 contributes to the ATP binding site. N-linked (GlcNAc...) asparagine glycosylation occurs at Asn217. Thr288 bears the Phosphothreonine; by CK2 mark. Residues 288–323 (TVEEPMEEEEAAKEEKEDSDDEAAVEEEEEEKKPKT) are disordered. The segment covering 289–317 (VEEPMEEEEAAKEEKEDSDDEAAVEEEEE) has biased composition (acidic residues). A Phosphoserine; by CK2 modification is found at Ser306. Ser403 carries the phosphoserine modification. N6-succinyllysine is present on Lys404. An N-linked (GlcNAc...) asparagine glycan is attached at Asn445. Ser447 carries the phosphoserine modification. At Lys479 the chain carries N6-acetyllysine. N-linked (GlcNAc...) asparagine glycosylation is found at Asn481 and Asn502. An N6-succinyllysine modification is found at Lys633. A disordered region spans residues 750-804 (DPDAKVEEEPEEEPEETTEDTTEDTEQDDEEEMDAGTDDEEQETVKKSTAEKDEL). Residues 757 to 791 (EEPEEEPEETTEDTTEDTEQDDEEEMDAGTDDEEQ) show a composition bias toward acidic residues. Phosphothreonine; by CK2 is present on residues Thr766, Thr770, Thr774, and Thr786. The span at 792 to 804 (ETVKKSTAEKDEL) shows a compositional bias: basic and acidic residues. A Prevents secretion from ER motif is present at residues 801-804 (KDEL).

This sequence belongs to the heat shock protein 90 family. Homodimer; disulfide-linked. Component of an EIF2 complex at least composed of CELF1/CUGBP1, CALR, CALR3, EIF2S1, EIF2S2, HSP90B1 and HSPA5. Part of a large chaperone multiprotein complex comprising DNAJB11, HSP90B1, HSPA5, HYOU, PDIA2, PDIA4, PDIA6, PPIB, SDF2L1, UGGT1 and very small amounts of ERP29, but not, or at very low levels, CALR nor CANX. Interacts with AIMP1; regulates its retention in the endoplasmic reticulum. Hyperglycosylated form interacts with OS9; promoting its degradation by the endoplasmic reticulum associated degradation (ERAD). Interacts with CNPY3. This interaction is disrupted in the presence of ATP. Interacts with TLR4 and TLR9, but not with TLR3. Interacts with MZB1 in a calcium-dependent manner. Interacts with METTL23. Interacts with IL1B; the interaction facilitates cargo translocation into the ERGIC. Interacts with EIF2AK3. In terms of processing, phosphorylated by CK2. N-glycosylated cotranslationally at Asn-217 by STT3A-containing OST-A complex: this glycosylation is constitutive. In response to various stress, 5 additional facultative sites (Asn-62, Asn-107, Asn-445, Asn-481 and Asn-502) can be glycosylated post-translationally by STT3B-containing OST-B complex, leading to a hyperglycosylated form that is degraded by the ER-associated degradation (ERAD) pathway. In normal conditions, the OST-A complex together with CCDC134 prevent glycosylation at facultative sites during protein folding, thereby preventing hyperglycosylation. Mechanistically, nascent HSP90B1 is tethered during translation to a specialized CCDC134-containing translocon that forms a microenvironment for its folding, in which STT3A associates with the SRT pseudosubstrate motif, and prevents access to facultative glycosylation sites until folding is completed, rendering its facultative sites inaccessible to the OST-B complex. Detected in heart muscle (at protein level).

The protein resides in the endoplasmic reticulum lumen. It localises to the sarcoplasmic reticulum lumen. Its subcellular location is the melanosome. The catalysed reaction is ATP + H2O = ADP + phosphate + H(+). Its function is as follows. ATP-dependent chaperone involved in the processing of proteins in the endoplasmic reticulum, regulating their transport. Together with MESD, acts as a modulator of the Wnt pathway by promoting the folding of LRP6, a coreceptor of the canonical Wnt pathway. When associated with CNPY3, required for proper folding of Toll-like receptors. Promotes folding and trafficking of TLR4 to the cell surface. May participate in the unfolding of cytosolic leaderless cargos (lacking the secretion signal sequence) such as the interleukin 1/IL-1 to facilitate their translocation into the ERGIC (endoplasmic reticulum-Golgi intermediate compartment) and secretion; the translocation process is mediated by the cargo receptor TMED10. May also function in endoplasmic reticulum associated degradation (ERAD); it is however unclear whether it participates to ERAD or is a target of ERAD. The polypeptide is Endoplasmin (HSP90B1) (Canis lupus familiaris (Dog)).